We begin with the raw amino-acid sequence, 649 residues long: Macrolide export ATP-binding/permease protein MacB 1 (649 aa).

Residues 5-243 enclose the ABC transporter domain; sequence LELEGIRRSY…AAAELMSLTP (239 aa). 41–48 provides a ligand contact to ATP; sequence GASGSGKS. 5 helical membrane-spanning segments follow: residues 274-294, 420-440, 524-544, 578-598, and 608-628; these read ALTM…LVVG, VVGQ…VVAE, LFLT…VMNI, VLVC…IGLI, and IAFP…IGVV.

The protein belongs to the ABC transporter superfamily. Macrolide exporter (TC 3.A.1.122) family. As to quaternary structure, homodimer. Part of the tripartite efflux system MacAB-TolC, which is composed of an inner membrane transporter, MacB, a periplasmic membrane fusion protein, MacA, and an outer membrane component, TolC. The complex forms a large protein conduit and can translocate molecules across both the inner and outer membranes. Interacts with MacA.

The protein resides in the cell inner membrane. In terms of biological role, part of the tripartite efflux system MacAB-TolC. MacB is a non-canonical ABC transporter that contains transmembrane domains (TMD), which form a pore in the inner membrane, and an ATP-binding domain (NBD), which is responsible for energy generation. Confers resistance against macrolides. This chain is Macrolide export ATP-binding/permease protein MacB 1, found in Yersinia pestis bv. Antiqua (strain Antiqua).